The primary structure comprises 148 residues: Single-stranded DNA-binding protein, mitochondrial (148 aa).

The transit peptide at 1 to 16 directs the protein to the mitochondrion; sequence MFRRPVVQVLRQFVRH. In terms of domain architecture, SSB spans 30-141; that stretch reads LNRVQLLGRV…IIADNIIFLS (112 aa). Phosphoserine occurs at positions 67 and 79. Lys-113 carries the post-translational modification N6-acetyllysine. Residue Lys-122 is modified to N6-succinyllysine.

Homotetramer. Interacts with MPG/AAG, through inhibition of its glycosylase activity it potentially prevents formation of DNA breaks in ssDNA, ensuring that base removal primarily occurs in dsDNA. Interacts with POLDIP2. Interacts with PRIMPOL.

The protein resides in the mitochondrion. The protein localises to the mitochondrion matrix. It localises to the mitochondrion nucleoid. Its function is as follows. Binds preferentially and cooperatively to pyrimidine rich single-stranded DNA (ss-DNA). In vitro, required to maintain the copy number of mitochondrial DNA (mtDNA) and plays a crucial role during mtDNA replication by stimulating the activity of the replisome components POLG and TWNK at the replication fork. Promotes the activity of the gamma complex polymerase POLG, largely by organizing the template DNA and eliminating secondary structures to favor ss-DNA conformations that facilitate POLG activity. In addition it is able to promote the 5'-3' unwinding activity of the mtDNA helicase TWNK. May also function in mtDNA repair. This Bos taurus (Bovine) protein is Single-stranded DNA-binding protein, mitochondrial (SSBP1).